The sequence spans 445 residues: Allantoinase (445 aa).

Zn(2+)-binding residues include His-63, His-65, Lys-150, His-186, His-238, and Asp-311. Residue Lys-150 is modified to N6-carboxylysine.

Belongs to the metallo-dependent hydrolases superfamily. Allantoinase family. As to quaternary structure, homotetramer. Zn(2+) is required as a cofactor. Carboxylation allows a single lysine to coordinate two zinc ions.

The enzyme catalyses (S)-allantoin + H2O = allantoate + H(+). It participates in nitrogen metabolism; (S)-allantoin degradation; allantoate from (S)-allantoin: step 1/1. Functionally, catalyzes the conversion of allantoin (5-ureidohydantoin) to allantoic acid by hydrolytic cleavage of the five-member hydantoin ring. The sequence is that of Allantoinase from Streptomyces avermitilis (strain ATCC 31267 / DSM 46492 / JCM 5070 / NBRC 14893 / NCIMB 12804 / NRRL 8165 / MA-4680).